A 757-amino-acid chain; its full sequence is Probable ubiquitin carboxyl-terminal hydrolase MINDY-4 (757 aa).

2 disordered regions span residues 152 to 173 (FVSSKRPPHKSKPMQTVPGETP) and 190 to 334 (SLDV…LPGG). Basic and acidic residues predominate over residues 190–201 (SLDVKRMGENSR). Serine 219 and serine 223 each carry phosphoserine. The segment covering 232–242 (SSPSSSSTQPQ) has biased composition (low complexity). Residues 254–277 (CTQQDILASSNSSPSRTSLGQLSE) are compositionally biased toward polar residues. Phosphoserine is present on serine 289. Basic and acidic residues predominate over residues 299-310 (PPWDRARPRDPS). Cysteine 456 acts as the Nucleophile in catalysis. The active-site Proton acceptor is histidine 677.

Belongs to the MINDY deubiquitinase family. FAM188 subfamily.

The enzyme catalyses Thiol-dependent hydrolysis of ester, thioester, amide, peptide and isopeptide bonds formed by the C-terminal Gly of ubiquitin (a 76-residue protein attached to proteins as an intracellular targeting signal).. In terms of biological role, probable hydrolase that can remove 'Lys-48'-linked conjugated ubiquitin from proteins. This chain is Probable ubiquitin carboxyl-terminal hydrolase MINDY-4, found in Homo sapiens (Human).